A 190-amino-acid polypeptide reads, in one-letter code: Inosine triphosphate pyrophosphatase (190 aa).

Residue 9–14 (TGNAKK) participates in ITP binding. Glu-39 provides a ligand contact to Mg(2+). Residues Lys-51, 67–68 (DT), Lys-84, 144–147 (FGWD), Lys-167, and 172–173 (HR) contribute to the ITP site.

It belongs to the HAM1 NTPase family. Homodimer. Mg(2+) is required as a cofactor. Requires Mn(2+) as cofactor.

The protein resides in the cytoplasm. The enzyme catalyses ITP + H2O = IMP + diphosphate + H(+). It carries out the reaction dITP + H2O = dIMP + diphosphate + H(+). It catalyses the reaction XTP + H2O = XMP + diphosphate + H(+). Its function is as follows. Pyrophosphatase that hydrolyzes non-canonical purine nucleotides such as inosine triphosphate (ITP), deoxyinosine triphosphate (dITP) or xanthosine 5'-triphosphate (XTP) to their respective monophosphate derivatives. The enzyme does not distinguish between the deoxy- and ribose forms. Probably excludes non-canonical purines from RNA and DNA precursor pools, thus preventing their incorporation into RNA and DNA and avoiding chromosomal lesions. In Pediculus humanus subsp. corporis (Body louse), this protein is Inosine triphosphate pyrophosphatase.